Reading from the N-terminus, the 785-residue chain is Endonuclease MutS2 (785 aa).

335–342 (GPNTGGKT) lines the ATP pocket. Residues 710 to 785 (LDLRGERYED…GNGVTIVEFK (76 aa)) form the Smr domain.

It belongs to the DNA mismatch repair MutS family. MutS2 subfamily. In terms of assembly, homodimer. Binds to stalled ribosomes, contacting rRNA.

Functionally, endonuclease that is involved in the suppression of homologous recombination and thus may have a key role in the control of bacterial genetic diversity. Its function is as follows. Acts as a ribosome collision sensor, splitting the ribosome into its 2 subunits. Detects stalled/collided 70S ribosomes which it binds and splits by an ATP-hydrolysis driven conformational change. Acts upstream of the ribosome quality control system (RQC), a ribosome-associated complex that mediates the extraction of incompletely synthesized nascent chains from stalled ribosomes and their subsequent degradation. Probably generates substrates for RQC. The sequence is that of Endonuclease MutS2 from Listeria monocytogenes serotype 4a (strain HCC23).